Here is a 243-residue protein sequence, read N- to C-terminus: Glycerophosphodiester phosphodiesterase (243 aa).

The GP-PDE domain maps to 3–239 (TLVIAHRGDS…DDPETLINLV (237 aa)). Residue His8 is the Proton acceptor of the active site. The Ca(2+) site is built by Glu35 and Asp37. The active-site Proton donor is His50. Glu110 provides a ligand contact to Ca(2+).

Belongs to the glycerophosphoryl diester phosphodiesterase family. In terms of assembly, homodimer. It depends on Mg(2+) as a cofactor. The cofactor is Ca(2+).

It catalyses the reaction a sn-glycero-3-phosphodiester + H2O = an alcohol + sn-glycerol 3-phosphate + H(+). The enzyme catalyses sn-glycerol 3-phosphocholine + H2O = sn-glycerol 3-phosphate + choline + H(+). Inhibited by EDTA. Glycerophosphodiester phosphodiesterase hydrolyzes glycerophosphodiesters into glycerol-3-phosphate (G3P) and the corresponding alcohol. Can use glycerophosphocholine. The protein is Glycerophosphodiester phosphodiesterase of Caldanaerobacter subterraneus subsp. tengcongensis (strain DSM 15242 / JCM 11007 / NBRC 100824 / MB4) (Thermoanaerobacter tengcongensis).